A 601-amino-acid chain; its full sequence is MLNHPSQGSDDAQDEKQGDFPVIEEEKTQAVTLKDSYVSDDVANSTERYNLSPSPEDEDFEGPTEEEMQTLRHVGGKIPMRCWLIAIVELSERFSYYGLSAPFQNYMEYGPNDSPKGVLSLNSQGATGLSYFFQFWCYVTPVFGGYVADTFWGKYNTICCGTAIYIAGIFILFITSIPSVGNRDSAIGGFIAAIILIGIATGMIKANLSVLIADQLPKRKPSIKVLKSGERVIVDSNITLQNVFMFFYFMINVGSLSLMATTELEYHKGFWAAYLLPFCFFWIAVVTLIFGKKQYIQRPIGDKVIAKSFKVCWILTKNKFDFNAAKPSVHPEKNYPWNDKFVDEIKRALAACKVFIFYPIYWTQYGTMISSFITQASMMELHGIPNDFLQAFDSIALIIFIPIFEKFVYPFIRRYTPLKPITKIFFGFMFGSFAMTWAAVLQSFVYKAGPWYNEPLGHNTPNHVHVCWQIPAYVLISFSEIFASITGLEYAYSKAPASMKSFIMSIFLLTNAFGSAIGCALSPVTVDPKFTWLFTGLAVACFISGCLFWLCFRKYNDTEEEMNAMDYEEEDEFDLNPISAPKANDIEILEPMESLRSTTKY.

A compositionally biased stretch (polar residues) spans 1–10; the sequence is MLNHPSQGSD. The segment at 1–66 is disordered; that stretch reads MLNHPSQGSD…DEDFEGPTEE (66 aa). The Extracellular portion of the chain corresponds to 1–150; it reads MLNHPSQGSD…PVFGGYVADT (150 aa). A compositionally biased stretch (basic and acidic residues) spans 14 to 28; the sequence is DEKQGDFPVIEEEKT. Tyr-37 carries the phosphotyrosine modification. Phosphoserine occurs at positions 39 and 45. A compositionally biased stretch (polar residues) spans 42–53; the sequence is VANSTERYNLSP. Positions 55–66 are enriched in acidic residues; the sequence is PEDEDFEGPTEE. The chain crosses the membrane as a helical span at residues 151 to 172; that stretch reads FWGKYNTICCGTAIYIAGIFIL. Residues 173–182 lie on the Cytoplasmic side of the membrane; that stretch reads FITSIPSVGN. The helical transmembrane segment at 183–202 threads the bilayer; sequence RDSAIGGFIAAIILIGIATG. Over 203 to 210 the chain is Extracellular; that stretch reads MIKANLSV. Residues 211–229 traverse the membrane as a helical segment; the sequence is LIADQLPKRKPSIKVLKSG. Residues 230–267 are Cytoplasmic-facing; it reads ERVIVDSNITLQNVFMFFYFMINVGSLSLMATTELEYH. Residues 268 to 287 form a helical membrane-spanning segment; the sequence is KGFWAAYLLPFCFFWIAVVT. Over 288 to 294 the chain is Extracellular; the sequence is LIFGKKQ. The chain crosses the membrane as a helical span at residues 295-316; sequence YIQRPIGDKVIAKSFKVCWILT. Residues 317–378 are Cytoplasmic-facing; sequence KNKFDFNAAK…ISSFITQASM (62 aa). Residues 379 to 399 form a helical membrane-spanning segment; the sequence is MELHGIPNDFLQAFDSIALII. The Extracellular segment spans residues 400 to 412; that stretch reads FIPIFEKFVYPFI. The helical transmembrane segment at 413 to 429 threads the bilayer; it reads RRYTPLKPITKIFFGFM. At 430 to 448 the chain is on the cytoplasmic side; the sequence is FGSFAMTWAAVLQSFVYKA. Residues 449 to 466 form a helical membrane-spanning segment; it reads GPWYNEPLGHNTPNHVHV. The Extracellular portion of the chain corresponds to 467-494; sequence CWQIPAYVLISFSEIFASITGLEYAYSK. Residues 495 to 513 form a helical membrane-spanning segment; it reads APASMKSFIMSIFLLTNAF. Topologically, residues 514-526 are cytoplasmic; sequence GSAIGCALSPVTV. Residues 527-547 traverse the membrane as a helical segment; that stretch reads DPKFTWLFTGLAVACFISGCL. At 548–554 the chain is on the extracellular side; the sequence is FWLCFRK. Residues 555–577 traverse the membrane as a helical segment; it reads YNDTEEEMNAMDYEEEDEFDLNP. The Cytoplasmic segment spans residues 578 to 601; sequence ISAPKANDIEILEPMESLRSTTKY. Ser-594 carries the post-translational modification Phosphoserine.

The protein belongs to the major facilitator superfamily. Proton-dependent oligopeptide transporter (POT/PTR) (TC 2.A.17) family.

It localises to the membrane. In terms of biological role, uptake of small peptides. This is Peptide transporter PTR2 (PTR2) from Saccharomyces cerevisiae (strain ATCC 204508 / S288c) (Baker's yeast).